The following is a 341-amino-acid chain: Anthranilate phosphoribosyltransferase (341 aa).

Residues G80, 83–84, T88, 90–93, 108–116, and S120 each bind 5-phospho-alpha-D-ribose 1-diphosphate; these read GD, NIST, and KHGNYSVSS. G80 lines the anthranilate pocket. S92 is a binding site for Mg(2+). An anthranilate-binding site is contributed by N111. R166 serves as a coordination point for anthranilate. Mg(2+) is bound by residues D224 and E225.

It belongs to the anthranilate phosphoribosyltransferase family. As to quaternary structure, homodimer. Mg(2+) is required as a cofactor.

The enzyme catalyses N-(5-phospho-beta-D-ribosyl)anthranilate + diphosphate = 5-phospho-alpha-D-ribose 1-diphosphate + anthranilate. It functions in the pathway amino-acid biosynthesis; L-tryptophan biosynthesis; L-tryptophan from chorismate: step 2/5. Functionally, catalyzes the transfer of the phosphoribosyl group of 5-phosphorylribose-1-pyrophosphate (PRPP) to anthranilate to yield N-(5'-phosphoribosyl)-anthranilate (PRA). The protein is Anthranilate phosphoribosyltransferase of Haloquadratum walsbyi (strain DSM 16790 / HBSQ001).